The primary structure comprises 282 residues: Kanosamine-6-phosphate phosphatase (282 aa).

Asp-25 functions as the Nucleophile in the catalytic mechanism. The Mg(2+) site is built by Asp-25 and Asp-27. Residue Lys-209 coordinates phosphate. Asp-232 and Ser-233 together coordinate Mg(2+). Residue Asn-235 participates in phosphate binding.

This sequence belongs to the HAD-like hydrolase superfamily. Cof family. As to quaternary structure, homotetramer. Mg(2+) is required as a cofactor.

It catalyses the reaction D-kanosamine 6-phosphate + H2O = kanosamine + phosphate. It functions in the pathway antibiotic biosynthesis; kanosamine biosynthesis. Functionally, involved in the biosynthesis of kanosamine (3-amino-3-deoxy-D-glucose), which is known to have antibiotic and antifungal properties, and to be a precursor of the antibiotic neotrehalosadiamine (3,3'-diamino-3,3'-dideoxy-alpha,beta-trehalose (NTD)). Catalyzes the dephosphorylation of kanosamine 6-phosphate to yield kanosamine. There is a trace amount of activity using glucosamine-6-phosphate. The sequence is that of Kanosamine-6-phosphate phosphatase (ntdB) from Bacillus subtilis (strain 168).